Here is a 438-residue protein sequence, read N- to C-terminus: 23S rRNA (uracil(1939)-C(5))-methyltransferase RlmD (438 aa).

The region spanning 11 to 69 is the TRAM domain; it reads LQPESKHQQVLVEKLDHQGAGIAYLNKKPLFIDGTLPGEEVVTQLTESKSKFARGKLIK. Positions 82, 88, 91, and 169 each coordinate [4Fe-4S] cluster. Residues Q272, F301, N306, E322, N349, and D370 each contribute to the S-adenosyl-L-methionine site. C396 (nucleophile) is an active-site residue.

This sequence belongs to the class I-like SAM-binding methyltransferase superfamily. RNA M5U methyltransferase family. RlmD subfamily.

The catalysed reaction is uridine(1939) in 23S rRNA + S-adenosyl-L-methionine = 5-methyluridine(1939) in 23S rRNA + S-adenosyl-L-homocysteine + H(+). Functionally, catalyzes the formation of 5-methyl-uridine at position 1939 (m5U1939) in 23S rRNA. The sequence is that of 23S rRNA (uracil(1939)-C(5))-methyltransferase RlmD from Vibrio vulnificus (strain CMCP6).